A 516-amino-acid polypeptide reads, in one-letter code: Glycosyl hydrolase family 109 protein 4 (516 aa).

The signal sequence occupies residues 1–18; that stretch reads MKKIKLLLVAGACVVLSA. Cys-19 carries the N-palmitoyl cysteine lipid modification. A lipid anchor (S-diacylglycerol cysteine) is attached at Cys-19. NAD(+) contacts are provided by residues 76 to 77, Asp-98, 146 to 149, 166 to 167, and Asn-195; these read MR, WLHH, and EV. Residues Tyr-224, Arg-247, 259–262, and Tyr-337 contribute to the substrate site; that span reads YATH. Tyr-259 lines the NAD(+) pocket.

This sequence belongs to the Gfo/Idh/MocA family. Glycosyl hydrolase 109 subfamily. NAD(+) serves as cofactor.

The protein localises to the cell membrane. Its function is as follows. Glycosidase. This Phocaeicola vulgatus (strain ATCC 8482 / DSM 1447 / JCM 5826 / CCUG 4940 / NBRC 14291 / NCTC 11154) (Bacteroides vulgatus) protein is Glycosyl hydrolase family 109 protein 4.